Consider the following 530-residue polypeptide: Seeligeriolysin (530 aa).

The first 25 residues, 1-25 (MKIFGLVIMSLLFVSLPITQQPEAR), serve as a signal peptide directing secretion. Residues 36 to 55 (TISPAETPESPPATPKTPVE) form a disordered region. The next 4 beta stranded transmembrane spans lie at 215–228 (ESQLIAKFGTAFKA), 235–244 (VNFEAISDGK), 313–322 (SNKVKTAFEA), and 330–342 (KGDVELTNIIKNS). Positions 484 to 494 (ECTGLFWEWWR) match the Conserved undecapeptide motif. Residues 516–517 (TL) carry the Cholesterol binding motif.

The protein belongs to the cholesterol-dependent cytolysin family. In terms of assembly, homooligomeric pore complex of 35 to 50 subunits; when inserted in the host membrane.

The protein resides in the secreted. Its subcellular location is the host cell membrane. Its function is as follows. A cholesterol-dependent toxin that causes cytolysis by forming pores in cholesterol containing host membranes. L.seeligeri is non-pathogenic, perhaps in part because this protein is about 25% as toxic as listeriolysin O. Mutating a single residue in the undecapeptide increases toxicity 2-fold. After binding to target membranes, the protein undergoes a major conformation change, leading to its insertion in the host membrane and formation of an oligomeric pore complex. Cholesterol is required for binding to host membranes, membrane insertion and pore formation; cholesterol binding is mediated by a Thr-Leu pair in the C-terminus. Can be reversibly inactivated by oxidation. This is Seeligeriolysin from Listeria seeligeri.